We begin with the raw amino-acid sequence, 200 residues long: Glycerol-3-phosphate acyltransferase (200 aa).

6 helical membrane passes run 9-29, 54-74, 81-101, 112-132, 140-160, and 165-185; these read IIIG…AYFW, VPGM…VLLA, DIAV…PLWL, GAGA…LVWL, YVSL…ALLN, and YLIF…SNIG.

It belongs to the PlsY family. In terms of assembly, probably interacts with PlsX.

It localises to the cell membrane. The enzyme catalyses an acyl phosphate + sn-glycerol 3-phosphate = a 1-acyl-sn-glycero-3-phosphate + phosphate. The protein operates within lipid metabolism; phospholipid metabolism. Catalyzes the transfer of an acyl group from acyl-phosphate (acyl-PO(4)) to glycerol-3-phosphate (G3P) to form lysophosphatidic acid (LPA). This enzyme utilizes acyl-phosphate as fatty acyl donor, but not acyl-CoA or acyl-ACP. The chain is Glycerol-3-phosphate acyltransferase from Desulforamulus reducens (strain ATCC BAA-1160 / DSM 100696 / MI-1) (Desulfotomaculum reducens).